A 487-amino-acid polypeptide reads, in one-letter code: V-type proton ATPase subunit B2 (487 aa).

An N-acetylglycine modification is found at Gly2.

This sequence belongs to the ATPase alpha/beta chains family. V-ATPase is a heteromultimeric enzyme composed of a peripheral catalytic V1 complex (components A to H) attached to an integral membrane V0 proton pore complex (components: a, c, c'', d and e).

The protein resides in the vacuole membrane. Functionally, non-catalytic subunit of the peripheral V1 complex of vacuolar ATPase. V-ATPase is responsible for acidifying a variety of intracellular compartments in eukaryotic cells. This is V-type proton ATPase subunit B2 (VHA-B2) from Arabidopsis thaliana (Mouse-ear cress).